Consider the following 126-residue polypeptide: Cystatin-C (126 aa).

Residues 1–18 (MKMLVFPVLAALFAVGLG) form the signal peptide. The Cystatin domain maps to 22-115 (GAPRDINISE…CTFSVWSRPW (94 aa)). The short motif at 64–68 (QVVSG) is the Secondary area of contact element. 2 disulfide bridges follow: Cys82–Cys92 and Cys106–Cys126.

It belongs to the cystatin family. Ubiquitously expressed in normal tissues including brain, eye, gill, heart, gullet, liver, spleen, stomach, pyloric ceca, intestine, kidney and muscle. Expressed, but not up-regulated, in lipopolysaccharide (LPS)-stimulated tissues including kidney, spleen, muscle and gill.

It localises to the secreted. In terms of biological role, thiol protease inhibitor. Has high papain inhibitory activity and inhibits to a lesser extent fish cathepsins L, S, K, F, X and bovine cathepsin B in vitro. The polypeptide is Cystatin-C (Paralichthys olivaceus (Bastard halibut)).